We begin with the raw amino-acid sequence, 338 residues long: uncharacterized protein (338 aa).

This is an uncharacterized protein from Schizosaccharomyces pombe (strain 972 / ATCC 24843) (Fission yeast).